The following is a 342-amino-acid chain: N-acetyl-gamma-glutamyl-phosphate reductase (342 aa).

Cysteine 149 is a catalytic residue.

Belongs to the NAGSA dehydrogenase family. Type 1 subfamily.

The protein localises to the cytoplasm. It catalyses the reaction N-acetyl-L-glutamate 5-semialdehyde + phosphate + NADP(+) = N-acetyl-L-glutamyl 5-phosphate + NADPH + H(+). It functions in the pathway amino-acid biosynthesis; L-arginine biosynthesis; N(2)-acetyl-L-ornithine from L-glutamate: step 3/4. Its function is as follows. Catalyzes the NADPH-dependent reduction of N-acetyl-5-glutamyl phosphate to yield N-acetyl-L-glutamate 5-semialdehyde. This chain is N-acetyl-gamma-glutamyl-phosphate reductase, found in Cereibacter sphaeroides (strain ATCC 17023 / DSM 158 / JCM 6121 / CCUG 31486 / LMG 2827 / NBRC 12203 / NCIMB 8253 / ATH 2.4.1.) (Rhodobacter sphaeroides).